A 111-amino-acid polypeptide reads, in one-letter code: Nucleoid-associated protein Teth514_0034 (111 aa).

It belongs to the YbaB/EbfC family. Homodimer.

The protein resides in the cytoplasm. The protein localises to the nucleoid. Its function is as follows. Binds to DNA and alters its conformation. May be involved in regulation of gene expression, nucleoid organization and DNA protection. The sequence is that of Nucleoid-associated protein Teth514_0034 from Thermoanaerobacter sp. (strain X514).